The sequence spans 1458 residues: Anaphase-promoting complex subunit 1 (1458 aa).

The disordered stretch occupies residues 186–210; it reads QSIKSSRNRRRESSFSREKNPDLTR. Residues 196 to 210 show a composition bias toward basic and acidic residues; it reads RESSFSREKNPDLTR. PC repeat units follow at residues 873–895, 959–982, 1006–1024, and 1099–1124; these read GLLL…KLLS, AAGF…SDLK, GAIM…LEVA, and GICF…INFL.

It belongs to the APC1 family. As to quaternary structure, the APC/C is composed of at least 13 subunits: apc1, apc2, nuc2, apc4, apc5, cut9, apc8, apc10, apc11, hcn1, apc13, apc14 and apc15.

Its function is as follows. Component of the anaphase-promoting complex/cyclosome (APC/C), a cell cycle-regulated E3 ubiquitin-protein ligase complex that controls progression through mitosis and the G1 phase of the cell cycle. The APC/C is thought to confer substrate specificity and, in the presence of ubiquitin-conjugating E2 enzymes, it catalyzes the formation of protein-ubiquitin conjugates that are subsequently degraded by the 26S proteasome. Mutations to this protein prevent the exit from mitosis. The sequence is that of Anaphase-promoting complex subunit 1 (cut4) from Schizosaccharomyces pombe (strain 972 / ATCC 24843) (Fission yeast).